Reading from the N-terminus, the 176-residue chain is MNRFSKTQIYLHWITLLFVAITYAAMELRGWFPKGSSTYLLMRETHYNAGIFVWVLMFSRLIIKHRYSDPSIVPPPPAWQMKAASLMHIMLYITFLALPLLGIALMAYSGKSWSFLGFNVSPFVTPNSEIKALIKNIHETWANIGYFLIAAHAGAALFHHYIQKDNTLLRMMPRRK.

The Cytoplasmic portion of the chain corresponds to 1–7; that stretch reads MNRFSKT. A helical transmembrane segment spans residues 8–28; that stretch reads QIYLHWITLLFVAITYAAMEL. A heme b-binding site is contributed by histidine 12. The Periplasmic segment spans residues 29–45; sequence RGWFPKGSSTYLLMRET. Residue histidine 46 participates in heme b binding. Residues 46-63 traverse the membrane as a helical segment; it reads HYNAGIFVWVLMFSRLII. Residues 64–85 are Cytoplasmic-facing; sequence KHRYSDPSIVPPPPAWQMKAAS. The chain crosses the membrane as a helical span at residues 86 to 106; it reads LMHIMLYITFLALPLLGIALM. The Periplasmic segment spans residues 107–141; it reads AYSGKSWSFLGFNVSPFVTPNSEIKALIKNIHETW. The heme b site is built by histidine 138 and histidine 152. Residues 142 to 162 traverse the membrane as a helical segment; sequence ANIGYFLIAAHAGAALFHHYI. At 163–176 the chain is on the cytoplasmic side; that stretch reads QKDNTLLRMMPRRK.

It belongs to the cytochrome b561 family. Heme b is required as a cofactor.

The protein localises to the cell inner membrane. The chain is Cytochrome b561 homolog 1 (yodB) from Escherichia coli (strain K12).